The following is a 2080-amino-acid chain: Dedicator of cytokinesis protein 6 (2080 aa).

Residues 20–31 show a composition bias toward basic and acidic residues; the sequence is EVRKQVSRERSG. Disordered regions lie at residues 20-44, 156-189, and 408-441; these read EVRK…SSLG, QDTP…SGAS, and PQDR…GDDA. The span at 32-42 shows a compositional bias: low complexity; the sequence is SPHSSRRSSSS. S178 bears the Phosphoserine mark. The span at 408–425 shows a compositional bias: basic and acidic residues; the sequence is PQDRDSDSEGERRPTWAE. The region spanning 546–712 is the C2 DOCK-type domain; the sequence is RNLLFVYPHS…GVFSVELTAV (167 aa). R863 carries the post-translational modification Omega-N-methylarginine. 3 positions are modified to phosphoserine: S870, S878, and S882. Residues 1101–1123 are disordered; the sequence is ASPSPSVSSTTSQSSTFSSQAPD. Over residues 1104–1122 the composition is skewed to low complexity; sequence SPSVSSTTSQSSTFSSQAP. Phosphoserine is present on S1341. The DOCKER domain maps to 1620–2056; that stretch reads RGYQGSPDLR…LQPLLTQRLP (437 aa). Position 2064 is a phosphothreonine (T2064). A phosphoserine mark is found at S2065 and S2069.

It belongs to the DOCK family. As to expression, widely expressed with highest levels in lung and heart.

The protein localises to the cytoplasm. The protein resides in the perinuclear region. Its function is as follows. Acts as a guanine nucleotide exchange factor (GEF) for CDC42 and RAC1 small GTPases. Through its activation of CDC42 and RAC1, regulates neurite outgrowth in an vitro differentiation system. This is Dedicator of cytokinesis protein 6 (Dock6) from Mus musculus (Mouse).